Consider the following 177-residue polypeptide: Large ribosomal subunit protein eL20 (177 aa).

This sequence belongs to the eukaryotic ribosomal protein eL20 family.

The sequence is that of Large ribosomal subunit protein eL20 (RpL18A) from Spodoptera frugiperda (Fall armyworm).